The primary structure comprises 543 residues: 2-succinyl-5-enolpyruvyl-6-hydroxy-3-cyclohexene-1-carboxylate synthase (543 aa).

It belongs to the TPP enzyme family. MenD subfamily. As to quaternary structure, homodimer. The cofactor is Mg(2+). Mn(2+) is required as a cofactor. Thiamine diphosphate serves as cofactor.

The catalysed reaction is isochorismate + 2-oxoglutarate + H(+) = 5-enolpyruvoyl-6-hydroxy-2-succinyl-cyclohex-3-ene-1-carboxylate + CO2. It functions in the pathway quinol/quinone metabolism; 1,4-dihydroxy-2-naphthoate biosynthesis; 1,4-dihydroxy-2-naphthoate from chorismate: step 2/7. Its pathway is quinol/quinone metabolism; menaquinone biosynthesis. In terms of biological role, catalyzes the thiamine diphosphate-dependent decarboxylation of 2-oxoglutarate and the subsequent addition of the resulting succinic semialdehyde-thiamine pyrophosphate anion to isochorismate to yield 2-succinyl-5-enolpyruvyl-6-hydroxy-3-cyclohexene-1-carboxylate (SEPHCHC). In Corynebacterium glutamicum (strain R), this protein is 2-succinyl-5-enolpyruvyl-6-hydroxy-3-cyclohexene-1-carboxylate synthase.